The following is a 509-amino-acid chain: tRNA-2-methylthio-N(6)-dimethylallyladenosine synthase (509 aa).

Positions 1-15 (MNEQQRLASQQVNSS) are enriched in polar residues. Residues 1–26 (MNEQQRLASQQVNSSTKKEEKDYSKY) are disordered. Residues 16–25 (TKKEEKDYSK) show a composition bias toward basic and acidic residues. The 119-residue stretch at 66–184 (RKFYIRTYGC…LPYILKDAMF (119 aa)) folds into the MTTase N-terminal domain. The [4Fe-4S] cluster site is built by Cys-75, Cys-111, Cys-145, Cys-221, Cys-225, and Cys-228. The Radical SAM core domain maps to 207 to 437 (RRGDIKAWVN…NALVNKLAIE (231 aa)). Residues 440–503 (DRYKGQIVEV…TWSLNGELVE (64 aa)) enclose the TRAM domain.

This sequence belongs to the methylthiotransferase family. MiaB subfamily. In terms of assembly, monomer. [4Fe-4S] cluster serves as cofactor.

The protein localises to the cytoplasm. The catalysed reaction is N(6)-dimethylallyladenosine(37) in tRNA + (sulfur carrier)-SH + AH2 + 2 S-adenosyl-L-methionine = 2-methylsulfanyl-N(6)-dimethylallyladenosine(37) in tRNA + (sulfur carrier)-H + 5'-deoxyadenosine + L-methionine + A + S-adenosyl-L-homocysteine + 2 H(+). Its function is as follows. Catalyzes the methylthiolation of N6-(dimethylallyl)adenosine (i(6)A), leading to the formation of 2-methylthio-N6-(dimethylallyl)adenosine (ms(2)i(6)A) at position 37 in tRNAs that read codons beginning with uridine. The protein is tRNA-2-methylthio-N(6)-dimethylallyladenosine synthase of Bacillus thuringiensis (strain Al Hakam).